We begin with the raw amino-acid sequence, 413 residues long: Alpha-1-antitrypsin-like protein CM55-SI (413 aa).

The N-terminal stretch at 1–24 (MPSSISWGLLLLAALSCLGPGSLA) is a signal peptide. A Pyrrolidone carboxylic acid modification is found at glutamine 25. N-linked (GlcNAc...) asparagine glycosylation is found at asparagine 65, asparagine 102, asparagine 165, and asparagine 266. The RCL stretch occupies residues 368-387 (GGTVLGNIRSILRYEVIFDR).

It belongs to the serpin family. As to expression, expressed in liver.

The sequence is that of Alpha-1-antitrypsin-like protein CM55-SI from Tamias sibiricus (Siberian chipmunk).